A 1373-amino-acid polypeptide reads, in one-letter code: DNA-directed RNA polymerase subunit beta (1373 aa).

It belongs to the RNA polymerase beta chain family. The RNAP catalytic core consists of 2 alpha, 1 beta, 1 beta' and 1 omega subunit. When a sigma factor is associated with the core the holoenzyme is formed, which can initiate transcription.

It catalyses the reaction RNA(n) + a ribonucleoside 5'-triphosphate = RNA(n+1) + diphosphate. Functionally, DNA-dependent RNA polymerase catalyzes the transcription of DNA into RNA using the four ribonucleoside triphosphates as substrates. The protein is DNA-directed RNA polymerase subunit beta of Rickettsia peacockii (strain Rustic).